Here is an 82-residue protein sequence, read N- to C-terminus: Sodium channel neurotoxin MeuNaTxalpha-3 (82 aa).

The N-terminal stretch at 1 to 8 (LVMAGVES) is a signal peptide. The region spanning 10–80 (RDGHIARNNN…VPIKVPGDCH (71 aa)) is the LCN-type CS-alpha/beta domain. Intrachain disulfides connect C20-C79, C24-C52, C38-C62, and C42-C64.

In terms of tissue distribution, expressed by the venom gland.

The protein localises to the secreted. In terms of biological role, alpha toxins bind voltage-independently at site-3 of sodium channels (Nav) and inhibit the inactivation of the activated channels, thereby blocking neuronal transmission. This is Sodium channel neurotoxin MeuNaTxalpha-3 from Mesobuthus eupeus (Lesser Asian scorpion).